A 500-amino-acid chain; its full sequence is Centrosomal protein of 57 kDa (500 aa).

Low complexity predominate over residues 1–16 (MAAASVSAASDSQFSS). Residues 1 to 59 (MAAASVSAASDSQFSSVLAEPSRSNGNMVRHSSSPYVLYPPDKPFLNSDLRRSPNKPTF) form a disordered region. Residues 22 to 35 (SRSNGNMVRHSSSP) show a composition bias toward polar residues. Phosphoserine is present on serine 53. Residues 58–239 (TFAYPESNSR…RAAELQSGLE (182 aa)) are centrosome localization domain (CLD). The stretch at 63 to 242 (ESNSRAIFSA…ELQSGLEANR (180 aa)) forms a coiled coil. Disordered stretches follow at residues 256-275 (STRKIKKKKSKPPEKKGSRT) and 432-478 (QKKE…RKNL). The tract at residues 278–491 (GAQPHYRLCL…KDMQTIQNSL (214 aa)) is mediates interaction with microtubules. Residues 389-449 (TVELKDNLEC…KKTLDEEGNS (61 aa)) are a coiled coil. 2 stretches are compositionally biased toward basic and acidic residues: residues 432 to 444 (QKKELKANKKTLD) and 461 to 475 (SKKDLAKQRPGEKSR).

The protein belongs to the translokin family. In terms of assembly, interacts with FGF2 and RAP80. Does not interact with FGF1 or FGF2 isoform 24 kDa. Homodimer and homooligomer. Interacts with microtubules. In terms of tissue distribution, ubiquitous (at protein level). Expressed in testis, predominantly in round spermatids. Low expression is detected in other tissues.

It localises to the nucleus. The protein localises to the cytoplasm. The protein resides in the cytoskeleton. Its subcellular location is the microtubule organizing center. It is found in the centrosome. Centrosomal protein which may be required for microtubule attachment to centrosomes. May act by forming ring-like structures around microtubules. Mediates nuclear translocation and mitogenic activity of the internalized growth factor FGF2. In Mus musculus (Mouse), this protein is Centrosomal protein of 57 kDa (Cep57).